Consider the following 150-residue polypeptide: NKERTFIMVKPDGVQRGLVGKIIERFEQKGFKLVALKFTWASKELLEKHYADLSARPFFPGLVNYMNSGPVVPMVWEGLNVVKTGRQMLGATNPADSLPGTIRGDFCIQVGRNIIHGSDAVESAEKEIALWFNEKELVTWTPAAKDWIYE.

Residues lysine 10, phenylalanine 58, arginine 86, threonine 92, arginine 103, and asparagine 113 each contribute to the ATP site. The Pros-phosphohistidine intermediate role is filled by histidine 116.

This sequence belongs to the NDK family. As to quaternary structure, homohexamer. It depends on Mg(2+) as a cofactor.

It carries out the reaction a 2'-deoxyribonucleoside 5'-diphosphate + ATP = a 2'-deoxyribonucleoside 5'-triphosphate + ADP. The enzyme catalyses a ribonucleoside 5'-diphosphate + ATP = a ribonucleoside 5'-triphosphate + ADP. In terms of biological role, major role in the synthesis of nucleoside triphosphates other than ATP. The ATP gamma phosphate is transferred to the NDP beta phosphate via a ping-pong mechanism, using a phosphorylated active-site intermediate. The sequence is that of Nucleoside diphosphate kinase (awd) from Drosophila yakuba (Fruit fly).